The chain runs to 368 residues: tRNA-specific 2-thiouridylase MnmA (368 aa).

ATP contacts are provided by residues 11–18 and methionine 37; that span reads GMSGGVDS. An interaction with target base in tRNA region spans residues 97–99; that stretch reads NPD. Cysteine 102 acts as the Nucleophile in catalysis. Cysteines 102 and 199 form a disulfide. Residue glycine 127 coordinates ATP. The segment at 149-151 is interaction with tRNA; that stretch reads KDQ. Cysteine 199 (cysteine persulfide intermediate) is an active-site residue. The interaction with tRNA stretch occupies residues 311 to 312; that stretch reads RY.

It belongs to the MnmA/TRMU family. Interacts with TusE.

It localises to the cytoplasm. It catalyses the reaction S-sulfanyl-L-cysteinyl-[protein] + uridine(34) in tRNA + AH2 + ATP = 2-thiouridine(34) in tRNA + L-cysteinyl-[protein] + A + AMP + diphosphate + H(+). Its function is as follows. Catalyzes the 2-thiolation of uridine at the wobble position (U34) of tRNA(Lys), tRNA(Glu) and tRNA(Gln), leading to the formation of s(2)U34, the first step of tRNA-mnm(5)s(2)U34 synthesis. Sulfur is provided by IscS, via a sulfur-relay system. Binds ATP and its substrate tRNAs. This Escherichia coli O1:K1 / APEC protein is tRNA-specific 2-thiouridylase MnmA.